The primary structure comprises 470 residues: MNPNQKIITIGSICMAIGIISLILQIGNIISIWVSHSIQTGSQNHTGICNQRIITYENSTWVNQTYVNISNTNVVAGKDTTSMTLAGNSSLCPIRGWAIYSKDNSIRIGSKGDVFVIREPFISCSHLECRTFFLTQGALLNDKHSNGTVKDRSPYRALMSCPIGEAPSPYNSRFESVAWSASACHDGMGWLTIGISGPDDGAVAVLKYNGIITETIKSWRKQILRTQESECVCVNGSCFTIMTDGPSDGQASYRIFKIEKGKITKSIELDAPNSHYEECSCYPDNGTVMCVCRDNWHGSNRPWVSFNQNLDYQIGYICSGVFGDNPRPKDGKGSCDPVNVDGADGVKGFSYRYGNGVWIGRTKSNSSRKGFEMIWDPNGWTDTDSNFLVKQDVVAMTDWSGYSGSFVQHPELTGLDCMRPCFWVELIRGRPREKTTIWTSGSSISFCGVNSDTVNWSWPDGAELPFTIDK.

At 1-6 (MNPNQK) the chain is on the intravirion side. A helical transmembrane segment spans residues 7 to 27 (IITIGSICMAIGIISLILQIG). The interval 11 to 33 (GSICMAIGIISLILQIGNIISIW) is involved in apical transport and lipid raft association. At 28–470 (NIISIWVSHS…GAELPFTIDK (443 aa)) the chain is on the virion surface side. Positions 36–90 (HSIQTGSQNHTGICNQRIITYENSTWVNQTYVNISNTNVVAGKDTTSMTLAGNSS) are hypervariable stalk region. Residues asparagine 44, asparagine 58, asparagine 63, asparagine 68, and asparagine 88 are each glycosylated (N-linked (GlcNAc...) asparagine; by host). Residues 91–470 (LCPIRGWAIY…GAELPFTIDK (380 aa)) are head of neuraminidase. Disulfide bonds link cysteine 92-cysteine 417, cysteine 124-cysteine 129, cysteine 184-cysteine 231, cysteine 233-cysteine 238, cysteine 279-cysteine 292, cysteine 281-cysteine 290, cysteine 318-cysteine 335, and cysteine 421-cysteine 447. Arginine 118 provides a ligand contact to substrate. Asparagine 146 carries N-linked (GlcNAc...) asparagine; by host glycosylation. The active-site Proton donor/acceptor is aspartate 151. Arginine 152 serves as a coordination point for substrate. Asparagine 235 carries N-linked (GlcNAc...) asparagine; by host glycosylation. 277–278 (EE) is a binding site for substrate. The N-linked (GlcNAc...) asparagine; by host glycan is linked to asparagine 285. Arginine 293 is a substrate binding site. Ca(2+) is bound by residues aspartate 294, glycine 298, and aspartate 324. The N-linked (GlcNAc...) asparagine; by host glycan is linked to asparagine 365. Arginine 368 serves as a coordination point for substrate. Catalysis depends on tyrosine 402, which acts as the Nucleophile. Asparagine 455 carries an N-linked (GlcNAc...) asparagine; by host glycan.

Belongs to the glycosyl hydrolase 34 family. In terms of assembly, homotetramer. Requires Ca(2+) as cofactor. N-glycosylated.

It is found in the virion membrane. It localises to the host apical cell membrane. It catalyses the reaction Hydrolysis of alpha-(2-&gt;3)-, alpha-(2-&gt;6)-, alpha-(2-&gt;8)- glycosidic linkages of terminal sialic acid residues in oligosaccharides, glycoproteins, glycolipids, colominic acid and synthetic substrates.. With respect to regulation, inhibited by the neuraminidase inhibitors zanamivir (Relenza) and oseltamivir (Tamiflu). These drugs interfere with the release of progeny virus from infected cells and are effective against all influenza strains. Resistance to neuraminidase inhibitors is quite rare. Catalyzes the removal of terminal sialic acid residues from viral and cellular glycoconjugates. Cleaves off the terminal sialic acids on the glycosylated HA during virus budding to facilitate virus release. Additionally helps virus spread through the circulation by further removing sialic acids from the cell surface. These cleavages prevent self-aggregation and ensure the efficient spread of the progeny virus from cell to cell. Otherwise, infection would be limited to one round of replication. Described as a receptor-destroying enzyme because it cleaves a terminal sialic acid from the cellular receptors. May facilitate viral invasion of the upper airways by cleaving the sialic acid moieties on the mucin of the airway epithelial cells. Likely to plays a role in the budding process through its association with lipid rafts during intracellular transport. May additionally display a raft-association independent effect on budding. Plays a role in the determination of host range restriction on replication and virulence. Sialidase activity in late endosome/lysosome traffic seems to enhance virus replication. The polypeptide is Neuraminidase (Influenza A virus (strain A/Kiev/59/1979 H1N1)).